Reading from the N-terminus, the 268-residue chain is Small ribosomal subunit protein eS1 (268 aa).

Belongs to the eukaryotic ribosomal protein eS1 family. As to quaternary structure, component of the small ribosomal subunit. Mature ribosomes consist of a small (40S) and a large (60S) subunit. The 40S subunit contains about 33 different proteins and 1 molecule of RNA (18S). The 60S subunit contains about 49 different proteins and 3 molecules of RNA (28S, 5.8S and 5S).

Its subcellular location is the cytoplasm. This chain is Small ribosomal subunit protein eS1, found in Artemia franciscana (Brine shrimp).